The following is a 606-amino-acid chain: MSKNIPLISCSPFPASRKIYQQSPLFSDVRVPLREISLTDGSGEKPLNVYDTSGPYTDKEAIIDLTKGLPAIGSSWLSKRADTEPYPARSVKPEDNGLTSSPIPAFEKKRPILRAKSGKAITQMAYARAGIITAEMEYVAIRENEGLAIKDQQTVQSSPLGGEIPEIYTAEFVRNEIANGRAIIPQNINHPECEPMIIGRNFRVKINANIGNSAVTSSMAEEVDKMVWAIRWGADTVMDLSTGRNIHNIREWIIRNSPVPIGTVPLYQALEKVQGIAENLTWDIFRDTLIEQAEQGVDYFTIHAGLRLPFIPMTIDRITGIVSRGGSIMAKWCLHHHKESFLYENFDEICDIASTYDISLSLGDGLRPGSIADANDEAQFAELKTLGELTKTAWEKNVQVMIEGPGHVPMHKIKENMEQQLDLCHEAPFYTLGPLTTDIAPGYDHITSAIGAAMIGWFGTAMLCYVTPKEHLGLPDKNDVKTGVITYKIAAHAADLAKGLPRAQLRDNALSRARFDFRWHDQFNLSLDPETACAFHDETMPKDAHKLVHFCSMCGPKFCSMRISHDIRDAAALKKAKGEGMVAMAEKYQERGDIYVEAPQKKRVNS.

The interval 84-103 is disordered; the sequence is EPYPARSVKPEDNGLTSSPI. Substrate contacts are provided by residues Asn209, Met238, Tyr267, His303, 323-325, 364-367, and Glu403; these read SRG and DGLR. His407 is a binding site for Zn(2+). Tyr430 provides a ligand contact to substrate. Zn(2+) is bound at residue His471. The [4Fe-4S] cluster site is built by Cys551, Cys554, and Cys559.

It belongs to the ThiC family. Homodimer. It depends on [4Fe-4S] cluster as a cofactor.

It carries out the reaction 5-amino-1-(5-phospho-beta-D-ribosyl)imidazole + S-adenosyl-L-methionine = 4-amino-2-methyl-5-(phosphooxymethyl)pyrimidine + CO + 5'-deoxyadenosine + formate + L-methionine + 3 H(+). Its pathway is cofactor biosynthesis; thiamine diphosphate biosynthesis. Its function is as follows. Catalyzes the synthesis of the hydroxymethylpyrimidine phosphate (HMP-P) moiety of thiamine from aminoimidazole ribotide (AIR) in a radical S-adenosyl-L-methionine (SAM)-dependent reaction. The polypeptide is Phosphomethylpyrimidine synthase (Bartonella tribocorum (strain CIP 105476 / IBS 506)).